An 80-amino-acid polypeptide reads, in one-letter code: Protein YibX (80 aa).

The polypeptide is Protein YibX (Escherichia coli (strain K12)).